Consider the following 340-residue polypeptide: Photosystem II assembly lipoprotein Ycf48 (340 aa).

The signal sequence occupies residues M1–G26. The N-palmitoyl cysteine moiety is linked to residue C27. The S-diacylglycerol cysteine moiety is linked to residue C27.

It belongs to the Ycf48 family. In terms of assembly, part of early PSII assembly complexes which includes D1 (psbA) and PsbI; not found in mature PSII. Binds to the lumenal side of PSII complexes. Interacts with YidC.

Its subcellular location is the cellular thylakoid membrane. A factor required for optimal assembly of photosystem II (PSII), acting in the early stages of PSII assembly. Also plays a role in replacement of photodamaged D1 (psbA). Assists YidC in synthesis of chlorophyll-binding proteins. The polypeptide is Photosystem II assembly lipoprotein Ycf48 (Picosynechococcus sp. (strain ATCC 27264 / PCC 7002 / PR-6) (Agmenellum quadruplicatum)).